Reading from the N-terminus, the 341-residue chain is Phenylalanine--tRNA ligase alpha subunit (341 aa).

Residue Glu256 participates in Mg(2+) binding.

This sequence belongs to the class-II aminoacyl-tRNA synthetase family. Phe-tRNA synthetase alpha subunit type 1 subfamily. In terms of assembly, tetramer of two alpha and two beta subunits. The cofactor is Mg(2+).

Its subcellular location is the cytoplasm. It carries out the reaction tRNA(Phe) + L-phenylalanine + ATP = L-phenylalanyl-tRNA(Phe) + AMP + diphosphate + H(+). This is Phenylalanine--tRNA ligase alpha subunit from Leptospira biflexa serovar Patoc (strain Patoc 1 / Ames).